A 295-amino-acid chain; its full sequence is Bifunctional protein FolD (295 aa).

NADP(+)-binding positions include 175–177 (GVS) and Ile243.

This sequence belongs to the tetrahydrofolate dehydrogenase/cyclohydrolase family. Homodimer.

The catalysed reaction is (6R)-5,10-methylene-5,6,7,8-tetrahydrofolate + NADP(+) = (6R)-5,10-methenyltetrahydrofolate + NADPH. It carries out the reaction (6R)-5,10-methenyltetrahydrofolate + H2O = (6R)-10-formyltetrahydrofolate + H(+). It functions in the pathway one-carbon metabolism; tetrahydrofolate interconversion. Functionally, catalyzes the oxidation of 5,10-methylenetetrahydrofolate to 5,10-methenyltetrahydrofolate and then the hydrolysis of 5,10-methenyltetrahydrofolate to 10-formyltetrahydrofolate. The sequence is that of Bifunctional protein FolD from Xylella fastidiosa (strain 9a5c).